The sequence spans 365 residues: Homeobox protein Nkx-6.1 (365 aa).

Positions 35–136 (LYPAAYPPLP…SSSSASATSA (102 aa)) are disordered. 3 stretches are compositionally biased toward low complexity: residues 48–59 (PSSSSSSSSSSS), 69–92 (PGGLKPPAAGGLSSLGSPPQQLSA), and 110–136 (ASGAALPSASPSGSSSSSSSSASATSA). A repressor domain region spans residues 102–269 (LSRPSMPVAS…KYLAGPERAR (168 aa)). R190 is subject to Asymmetric dimethylarginine. The segment at residues 237–296 (RKHTRPTFSGQQIFALEKTFEQTKYLAGPERARLAYSLGMTESQVKVWFQNRRTKWRKKH) is a DNA-binding region (homeobox). Positions 295-365 (KHAAEMATAK…LHASEAEGSS (71 aa)) are disordered. Positions 305–318 (KKQDSETERLKGTS) are enriched in basic and acidic residues. Residues 307–365 (QDSETERLKGTSENEEDDDDYNKPLDPNSDDEKITQLLKKHKSSGGSLLLHASEAEGSS) are involved in DNA-binding.

Pancreatic beta cells.

The protein localises to the nucleus. Transcription factor which binds to specific A/T-rich DNA sequences in the promoter regions of a number of genes. Involved in the development of insulin-producing beta cells in the islets of Langerhans at the secondary transition. Together with NKX2-2 and IRX3 acts to restrict the generation of motor neurons to the appropriate region of the neural tube. Belongs to the class II proteins of neuronal progenitor factors, which are induced by SHH signals. The sequence is that of Homeobox protein Nkx-6.1 (Nkx6-1) from Rattus norvegicus (Rat).